Reading from the N-terminus, the 272-residue chain is GEM-like protein 5 (272 aa).

A disordered region spans residues 1–42 (MTGSQEDQPKIIIDQEQPKTLETEHQPEPSSSSPDQKKWGTH). Basic and acidic residues predominate over residues 16–27 (EQPKTLETEHQP). A GRAM domain is found at 143–221 (SLFRQIFGTE…ANVATVNPVV (79 aa)).

Belongs to the GEM family.

The sequence is that of GEM-like protein 5 from Arabidopsis thaliana (Mouse-ear cress).